We begin with the raw amino-acid sequence, 311 residues long: tRNA-cytidine(32) 2-sulfurtransferase (311 aa).

Residues Ser-45–Ser-50 carry the PP-loop motif motif. Residues Cys-120, Cys-123, and Cys-211 each coordinate [4Fe-4S] cluster.

It belongs to the TtcA family. Homodimer. Requires Mg(2+) as cofactor. It depends on [4Fe-4S] cluster as a cofactor.

The protein resides in the cytoplasm. It catalyses the reaction cytidine(32) in tRNA + S-sulfanyl-L-cysteinyl-[cysteine desulfurase] + AH2 + ATP = 2-thiocytidine(32) in tRNA + L-cysteinyl-[cysteine desulfurase] + A + AMP + diphosphate + H(+). It participates in tRNA modification. Its function is as follows. Catalyzes the ATP-dependent 2-thiolation of cytidine in position 32 of tRNA, to form 2-thiocytidine (s(2)C32). The sulfur atoms are provided by the cysteine/cysteine desulfurase (IscS) system. This is tRNA-cytidine(32) 2-sulfurtransferase from Shewanella pealeana (strain ATCC 700345 / ANG-SQ1).